Reading from the N-terminus, the 2260-residue chain is Protein Ycf2 (2260 aa).

1614–1621 (GSIGTGRS) provides a ligand contact to ATP.

It belongs to the Ycf2 family.

Its subcellular location is the plastid. The protein localises to the chloroplast stroma. In terms of biological role, probable ATPase of unknown function. Its presence in a non-photosynthetic plant (Epifagus virginiana) and experiments in tobacco indicate that it has an essential function which is probably not related to photosynthesis. The sequence is that of Protein Ycf2 from Dioscorea elephantipes (Elephant's foot yam).